The chain runs to 66 residues: Large ribosomal subunit protein bL35 (66 aa).

It belongs to the bacterial ribosomal protein bL35 family.

In Leptospira biflexa serovar Patoc (strain Patoc 1 / Ames), this protein is Large ribosomal subunit protein bL35.